A 447-amino-acid chain; its full sequence is N-succinylarginine dihydrolase (447 aa).

Substrate-binding positions include 19 to 28 (AGLSFGNEAS), Asn110, and 137 to 138 (HR). Residue Glu174 is part of the active site. Residue Arg212 coordinates substrate. Residue His248 is part of the active site. Residues Asp250 and Asn359 each coordinate substrate. Cys365 serves as the catalytic Nucleophile.

Belongs to the succinylarginine dihydrolase family. In terms of assembly, homodimer.

It catalyses the reaction N(2)-succinyl-L-arginine + 2 H2O + 2 H(+) = N(2)-succinyl-L-ornithine + 2 NH4(+) + CO2. It functions in the pathway amino-acid degradation; L-arginine degradation via AST pathway; L-glutamate and succinate from L-arginine: step 2/5. Functionally, catalyzes the hydrolysis of N(2)-succinylarginine into N(2)-succinylornithine, ammonia and CO(2). This chain is N-succinylarginine dihydrolase, found in Escherichia coli (strain K12 / MC4100 / BW2952).